The following is a 202-amino-acid chain: Josephin-1 (202 aa).

Serine 15 carries the phosphoserine modification. The region spanning 23–202 (PPQIYHEKQR…EAHQSWRADV (180 aa)) is the Josephin domain. Residue cysteine 36 is the Nucleophile of the active site. Histidine 139 serves as the catalytic Proton acceptor.

In terms of assembly, interacts with beta-actin/ACTB. Monoubiquitinated. Ubiquitination activates deubiquitination activity in vitro.

The protein resides in the cell membrane. The protein localises to the cytoplasm. The enzyme catalyses Thiol-dependent hydrolysis of ester, thioester, amide, peptide and isopeptide bonds formed by the C-terminal Gly of ubiquitin (a 76-residue protein attached to proteins as an intracellular targeting signal).. In terms of biological role, deubiquitinates monoubiquitinated probes (in vitro). When ubiquitinated, cleaves 'Lys-63'-linked and 'Lys-48'-linked poly-ubiquitin chains (in vitro), hence may act as a deubiquitinating enzyme. May increase macropinocytosis and suppress clathrin- and caveolae-mediated endocytosis. May enhance membrane dynamics and cell motility independently of its catalytic activity. This is Josephin-1 (JOSD1) from Bos taurus (Bovine).